The primary structure comprises 289 residues: Probable signal peptidase I (289 aa).

Residues 1–53 (MTETTDSVPEPPSDADQLQPKVSICGLDMPAEVSETAAEAAIGVSEPKKRSAL) are Cytoplasmic-facing. Residues 54-74 (WEFAILAVIAIGLYYVMLTFV) form a helical membrane-spanning segment. Residues 75–289 (ARPYLIPSES…VGSVNSQQGQ (215 aa)) lie on the Extracellular side of the membrane. Catalysis depends on residues Ser84 and Lys162.

This sequence belongs to the peptidase S26 family.

The protein localises to the cell membrane. It carries out the reaction Cleavage of hydrophobic, N-terminal signal or leader sequences from secreted and periplasmic proteins.. This chain is Probable signal peptidase I (lepB), found in Mycobacterium leprae (strain TN).